Reading from the N-terminus, the 723-residue chain is Aminodeoxychorismate synthase (723 aa).

The Glutamine amidotransferase type-1 domain occupies 2-195 (RTLLVDNYDS…RDLTERHGRT (194 aa)). Catalysis depends on cysteine 82, which acts as the Nucleophile. The segment at 96 to 117 (VGRAPEPRHGRTSAVRHDGTGL) is disordered. Over residues 98–114 (RAPEPRHGRTSAVRHDG) the composition is skewed to basic and acidic residues. Catalysis depends on residues histidine 169 and glutamate 171. Disordered regions lie at residues 192–219 (HGRT…KATT) and 693–723 (FPGR…VLPG). The segment at 255-723 (LDSSRPGGEL…GAPKDLVLPG (469 aa)) is PABB component. The span at 695 to 704 (GRERPGKDLD) shows a compositional bias: basic and acidic residues.

The protein in the C-terminal section; belongs to the anthranilate synthase component I family.

It carries out the reaction chorismate + L-glutamine = 4-amino-4-deoxychorismate + L-glutamate. It functions in the pathway antibiotic biosynthesis; candicidin biosynthesis. Its function is as follows. Involved in candicidin biosynthesis. Catalyzes the biosynthesis of 4-amino-4-deoxychorismate (ADC) from chorismate and glutamine. In Streptomyces griseus, this protein is Aminodeoxychorismate synthase.